Reading from the N-terminus, the 160-residue chain is Transcription antitermination protein NusB (160 aa).

Belongs to the NusB family.

Functionally, involved in transcription antitermination. Required for transcription of ribosomal RNA (rRNA) genes. Binds specifically to the boxA antiterminator sequence of the ribosomal RNA (rrn) operons. This Salinibacter ruber (strain DSM 13855 / M31) protein is Transcription antitermination protein NusB.